The following is a 351-amino-acid chain: UDP-N-acetylenolpyruvoylglucosamine reductase (351 aa).

The FAD-binding PCMH-type domain occupies 25–196 (HIQAQARWLL…TAVEFRLPLL (172 aa)). Residue R173 is part of the active site. The active-site Proton donor is the S246. E343 is a catalytic residue.

Belongs to the MurB family. FAD is required as a cofactor.

It is found in the cytoplasm. The catalysed reaction is UDP-N-acetyl-alpha-D-muramate + NADP(+) = UDP-N-acetyl-3-O-(1-carboxyvinyl)-alpha-D-glucosamine + NADPH + H(+). It functions in the pathway cell wall biogenesis; peptidoglycan biosynthesis. Cell wall formation. The chain is UDP-N-acetylenolpyruvoylglucosamine reductase from Xylella fastidiosa (strain M23).